Here is a 241-residue protein sequence, read N- to C-terminus: Probable 2-phosphosulfolactate phosphatase (241 aa).

Belongs to the ComB family. It depends on Mg(2+) as a cofactor.

It catalyses the reaction (2R)-O-phospho-3-sulfolactate + H2O = (2R)-3-sulfolactate + phosphate. This chain is Probable 2-phosphosulfolactate phosphatase, found in Microcystis aeruginosa (strain NIES-843 / IAM M-2473).